Reading from the N-terminus, the 259-residue chain is Type III pantothenate kinase (259 aa).

9-16 (DAGNSRIK) provides a ligand contact to ATP. Residues Y93 and 100-103 (GSDR) each bind substrate. The active-site Proton acceptor is D102. ATP is bound at residue T126. Residue T190 participates in substrate binding.

The protein belongs to the type III pantothenate kinase family. Homodimer. NH4(+) is required as a cofactor. The cofactor is K(+).

The protein localises to the cytoplasm. It catalyses the reaction (R)-pantothenate + ATP = (R)-4'-phosphopantothenate + ADP + H(+). Its pathway is cofactor biosynthesis; coenzyme A biosynthesis; CoA from (R)-pantothenate: step 1/5. Functionally, catalyzes the phosphorylation of pantothenate (Pan), the first step in CoA biosynthesis. The polypeptide is Type III pantothenate kinase (Burkholderia thailandensis (strain ATCC 700388 / DSM 13276 / CCUG 48851 / CIP 106301 / E264)).